Here is a 69-residue protein sequence, read N- to C-terminus: MSNRQTGTVKWFNDEKGFGFITPQSGDDLFVHFKAIQSDGFKSLKEGQQVSFIATRGQKGMQAEEVQVI.

The 60-residue stretch at 7–66 (GTVKWFNDEKGFGFITPQSGDDLFVHFKAIQSDGFKSLKEGQQVSFIATRGQKGMQAEEV) folds into the CSD domain.

The protein localises to the cytoplasm. Its function is as follows. Affects cell viability at low temperatures. This Pseudomonas fragi protein is Cold shock protein CapB (capB).